Here is an 89-residue protein sequence, read N- to C-terminus: Small ribosomal subunit protein uS15 (89 aa).

It belongs to the universal ribosomal protein uS15 family. In terms of assembly, part of the 30S ribosomal subunit. Forms a bridge to the 50S subunit in the 70S ribosome, contacting the 23S rRNA.

In terms of biological role, one of the primary rRNA binding proteins, it binds directly to 16S rRNA where it helps nucleate assembly of the platform of the 30S subunit by binding and bridging several RNA helices of the 16S rRNA. Forms an intersubunit bridge (bridge B4) with the 23S rRNA of the 50S subunit in the ribosome. This chain is Small ribosomal subunit protein uS15, found in Thiobacillus denitrificans (strain ATCC 25259 / T1).